Consider the following 242-residue polypeptide: Small ribosomal subunit protein uS3 (242 aa).

Residues 39–110 (IRRFIHKKYG…QVRINVVEVE (72 aa)) enclose the KH type-2 domain. The tract at residues 217–242 (TMPVGASPRRRGNRRPQQFEDRSNEG) is disordered. Residues 233-242 (QQFEDRSNEG) show a composition bias toward basic and acidic residues.

The protein belongs to the universal ribosomal protein uS3 family. Part of the 30S ribosomal subunit. Forms a tight complex with proteins S10 and S14.

Functionally, binds the lower part of the 30S subunit head. Binds mRNA in the 70S ribosome, positioning it for translation. This chain is Small ribosomal subunit protein uS3, found in Prochlorococcus marinus (strain MIT 9313).